The sequence spans 458 residues: Protochlorophyllide reductase, chloroplastic (458 aa).

Belongs to the short-chain dehydrogenases/reductases (SDR) family. POR subfamily.

It localises to the plastid. The protein localises to the chloroplast. The enzyme catalyses chlorophyllide a + NADP(+) = protochlorophyllide a + NADPH + H(+). It functions in the pathway porphyrin-containing compound metabolism; chlorophyll biosynthesis. Functionally, phototransformation of protochlorophyllide (Pchlide) to chlorophyllide (Chlide). The sequence is that of Protochlorophyllide reductase, chloroplastic (PORA) from Marchantia paleacea (Liverwort).